The chain runs to 22 residues: Probable ATP-dependent Clp protease proteolytic subunit (22 aa).

This sequence belongs to the peptidase S14 family. Component of the chloroplastic Clp protease core complex.

It catalyses the reaction Hydrolysis of proteins to small peptides in the presence of ATP and magnesium. alpha-casein is the usual test substrate. In the absence of ATP, only oligopeptides shorter than five residues are hydrolyzed (such as succinyl-Leu-Tyr-|-NHMec, and Leu-Tyr-Leu-|-Tyr-Trp, in which cleavage of the -Tyr-|-Leu- and -Tyr-|-Trp bonds also occurs).. Its function is as follows. Cleaves peptides in various proteins in a process that requires ATP hydrolysis. Has a chymotrypsin-like activity. Plays a major role in the degradation of misfolded proteins. In Populus euphratica (Euphrates poplar), this protein is Probable ATP-dependent Clp protease proteolytic subunit.